The following is a 248-amino-acid chain: Proteasome subunit alpha (248 aa).

This sequence belongs to the peptidase T1A family. As to quaternary structure, the 20S proteasome core is composed of 14 alpha and 14 beta subunits that assemble into four stacked heptameric rings, resulting in a barrel-shaped structure. The two inner rings, each composed of seven catalytic beta subunits, are sandwiched by two outer rings, each composed of seven alpha subunits. The catalytic chamber with the active sites is on the inside of the barrel. Has a gated structure, the ends of the cylinder being occluded by the N-termini of the alpha-subunits. Is capped by the proteasome-associated ATPase, ARC.

It localises to the cytoplasm. It participates in protein degradation; proteasomal Pup-dependent pathway. Its activity is regulated as follows. The formation of the proteasomal ATPase ARC-20S proteasome complex, likely via the docking of the C-termini of ARC into the intersubunit pockets in the alpha-rings, may trigger opening of the gate for substrate entry. Interconversion between the open-gate and close-gate conformations leads to a dynamic regulation of the 20S proteasome proteolysis activity. Functionally, component of the proteasome core, a large protease complex with broad specificity involved in protein degradation. This Mycobacterium tuberculosis (strain ATCC 25177 / H37Ra) protein is Proteasome subunit alpha.